Here is a 313-residue protein sequence, read N- to C-terminus: Porphobilinogen deaminase (313 aa).

At C241 the chain carries S-(dipyrrolylmethanemethyl)cysteine.

Belongs to the HMBS family. Monomer. It depends on dipyrromethane as a cofactor.

It carries out the reaction 4 porphobilinogen + H2O = hydroxymethylbilane + 4 NH4(+). Its pathway is porphyrin-containing compound metabolism; protoporphyrin-IX biosynthesis; coproporphyrinogen-III from 5-aminolevulinate: step 2/4. The protein operates within porphyrin-containing compound metabolism; chlorophyll biosynthesis. Functionally, tetrapolymerization of the monopyrrole PBG into the hydroxymethylbilane pre-uroporphyrinogen in several discrete steps. This is Porphobilinogen deaminase from Chlorobium phaeovibrioides (strain DSM 265 / 1930) (Prosthecochloris vibrioformis (strain DSM 265)).